Reading from the N-terminus, the 297-residue chain is N-acetylneuraminate lyase (297 aa).

The aceneuramate site is built by Ser47 and Thr48. Tyr137 acts as the Proton donor in catalysis. Lys165 serves as the catalytic Schiff-base intermediate with substrate. Aceneuramate-binding residues include Thr167, Gly189, Asp191, Glu192, and Ser208.

It belongs to the DapA family. NanA subfamily. Homotetramer.

The protein resides in the cytoplasm. The enzyme catalyses aceneuramate = aldehydo-N-acetyl-D-mannosamine + pyruvate. The protein operates within amino-sugar metabolism; N-acetylneuraminate degradation; D-fructose 6-phosphate from N-acetylneuraminate: step 1/5. In terms of biological role, catalyzes the reversible aldol cleavage of N-acetylneuraminic acid (sialic acid; Neu5Ac) to form pyruvate and N-acetylmannosamine (ManNAc) via a Schiff base intermediate. The chain is N-acetylneuraminate lyase from Escherichia coli (strain SMS-3-5 / SECEC).